We begin with the raw amino-acid sequence, 256 residues long: uncharacterized protein (256 aa).

Positions 1 to 24 (MIKRVNKLVLGISLLFLVISITAG) are cleaved as a signal peptide. Residue C25 is the site of N-palmitoyl cysteine attachment. The S-diacylglycerol cysteine moiety is linked to residue C25.

Belongs to the staphylococcal tandem lipoprotein family.

The protein resides in the cell membrane. This is an uncharacterized protein from Staphylococcus aureus (strain NCTC 8325 / PS 47).